A 333-amino-acid chain; its full sequence is Thiamine-monophosphate kinase (333 aa).

The Mg(2+) site is built by D35, T50, and D51. Residue H58 participates in substrate binding. Residue D80 coordinates Mg(2+). Residues Y111, 128–129, and R153 contribute to the ATP site; that span reads GD. D129 is a binding site for Mg(2+). D230 contributes to the Mg(2+) binding site. S232 serves as a coordination point for ATP. D233 contacts Mg(2+). Substrate is bound by residues E278 and F330.

This sequence belongs to the thiamine-monophosphate kinase family.

It catalyses the reaction thiamine phosphate + ATP = thiamine diphosphate + ADP. It functions in the pathway cofactor biosynthesis; thiamine diphosphate biosynthesis; thiamine diphosphate from thiamine phosphate: step 1/1. In terms of biological role, catalyzes the ATP-dependent phosphorylation of thiamine-monophosphate (TMP) to form thiamine-pyrophosphate (TPP), the active form of vitamin B1. This chain is Thiamine-monophosphate kinase, found in Prochlorococcus marinus (strain SARG / CCMP1375 / SS120).